The sequence spans 576 residues: Formate--tetrahydrofolate ligase 2 (576 aa).

Position 69-76 (69-76 (TPLGEGKT)) interacts with ATP.

Belongs to the formate--tetrahydrofolate ligase family.

It carries out the reaction (6S)-5,6,7,8-tetrahydrofolate + formate + ATP = (6R)-10-formyltetrahydrofolate + ADP + phosphate. The protein operates within one-carbon metabolism; tetrahydrofolate interconversion. This is Formate--tetrahydrofolate ligase 2 from Rubrobacter xylanophilus (strain DSM 9941 / JCM 11954 / NBRC 16129 / PRD-1).